A 268-amino-acid chain; its full sequence is Zygote formation protein zyg1 (268 aa).

Functionally, plays an essential role in zygote formation by inducing sexual cell fusion. Overexpressing cells eventually formed many loose mounds, in which giant multinucleate cells were surrounded by normal-sized cells. In Dictyostelium mucoroides (Slime mold), this protein is Zygote formation protein zyg1 (zyg1).